Reading from the N-terminus, the 186-residue chain is Protein FAM219A (186 aa).

2 disordered regions span residues 1–47 (MMEE…NYKP) and 59–132 (ELAR…GYSS). A compositionally biased stretch (polar residues) spans 67–81 (KNGTVGSPVNQQPKK). The span at 123–132 (SRYSSSGYSS) shows a compositional bias: low complexity.

This sequence belongs to the FAM219 family.

In Danio rerio (Zebrafish), this protein is Protein FAM219A (fam219a).